A 178-amino-acid polypeptide reads, in one-letter code: Large ribosomal subunit protein uL6 (178 aa).

Belongs to the universal ribosomal protein uL6 family. In terms of assembly, part of the 50S ribosomal subunit.

This protein binds to the 23S rRNA, and is important in its secondary structure. It is located near the subunit interface in the base of the L7/L12 stalk, and near the tRNA binding site of the peptidyltransferase center. This is Large ribosomal subunit protein uL6 from Helicobacter pylori (strain HPAG1).